Reading from the N-terminus, the 384-residue chain is Galactokinase (384 aa).

Substrate is bound at residue 34-37 (EHTD). ATP is bound at residue 123-129 (SSGLSSS). Residues Ser-129 and Glu-161 each contribute to the Mg(2+) site. The Proton acceptor role is filled by Asp-173. Residue Tyr-222 coordinates substrate.

It belongs to the GHMP kinase family. GalK subfamily.

Its subcellular location is the cytoplasm. It catalyses the reaction alpha-D-galactose + ATP = alpha-D-galactose 1-phosphate + ADP + H(+). It functions in the pathway carbohydrate metabolism; galactose metabolism. Catalyzes the transfer of the gamma-phosphate of ATP to D-galactose to form alpha-D-galactose-1-phosphate (Gal-1-P). The protein is Galactokinase of Glaesserella parasuis serovar 5 (strain SH0165) (Haemophilus parasuis).